The sequence spans 184 residues: Shikimate kinase (184 aa).

17 to 22 provides a ligand contact to ATP; the sequence is GAGKTT. Position 21 (threonine 21) interacts with Mg(2+). Aspartate 39, arginine 63, and glycine 85 together coordinate substrate. Position 123 (arginine 123) interacts with ATP. Arginine 142 lines the substrate pocket.

Belongs to the shikimate kinase family. In terms of assembly, monomer. Requires Mg(2+) as cofactor.

The protein localises to the cytoplasm. The catalysed reaction is shikimate + ATP = 3-phosphoshikimate + ADP + H(+). It functions in the pathway metabolic intermediate biosynthesis; chorismate biosynthesis; chorismate from D-erythrose 4-phosphate and phosphoenolpyruvate: step 5/7. In terms of biological role, catalyzes the specific phosphorylation of the 3-hydroxyl group of shikimic acid using ATP as a cosubstrate. The polypeptide is Shikimate kinase (Burkholderia thailandensis (strain ATCC 700388 / DSM 13276 / CCUG 48851 / CIP 106301 / E264)).